The sequence spans 219 residues: 2-hydroxy-3-keto-5-methylthiopentenyl-1-phosphate phosphatase (219 aa).

Belongs to the HAD-like hydrolase superfamily. MtnX family.

It catalyses the reaction 2-hydroxy-5-methylsulfanyl-3-oxopent-1-enyl phosphate + H2O = 1,2-dihydroxy-5-(methylsulfanyl)pent-1-en-3-one + phosphate. Its pathway is amino-acid biosynthesis; L-methionine biosynthesis via salvage pathway; L-methionine from S-methyl-5-thio-alpha-D-ribose 1-phosphate: step 4/6. In terms of biological role, dephosphorylates 2-hydroxy-3-keto-5-methylthiopentenyl-1-phosphate (HK-MTPenyl-1-P) yielding 1,2-dihydroxy-3-keto-5-methylthiopentene (DHK-MTPene). This Bacillus thuringiensis (strain Al Hakam) protein is 2-hydroxy-3-keto-5-methylthiopentenyl-1-phosphate phosphatase.